The sequence spans 550 residues: Solute carrier family 22 member 6 (550 aa).

The Cytoplasmic segment spans residues 1-9 (MAFNDLLQQ). The helical transmembrane segment at 10–30 (VGGVGRFQQIQVTLVVLPLLL) threads the bilayer. The Extracellular portion of the chain corresponds to 31-135 (MASHNTLQNF…LVCSHRALRQ (105 aa)). N-linked (GlcNAc...) asparagine glycans are attached at residues N39, N92, and N113. The chain crosses the membrane as a helical span at residues 136 to 156 (LAQSLYMVGVLLGAMVFGYLA). Topologically, residues 157 to 164 (DRLGRRKV) are cytoplasmic. A helical membrane pass occupies residues 165–187 (LILNYLQTAVSGTCTAFAPNFSI). Residues 188–195 (YCAFRLLS) lie on the Extracellular side of the membrane. The helical transmembrane segment at 196–216 (GMSLAGISLNCMTLNVEWMPI) threads the bilayer. Over 217-224 (HTRACVGT) the chain is Cytoplasmic. Residues 225–245 (LIGYVYSLGQFLLAGVAYAVP) form a helical membrane-spanning segment. The Extracellular segment spans residues 246–248 (HWR). Residues 249–269 (HLQLLVSAPFFAFFIYSWFFI) form a helical membrane-spanning segment. At 270-337 (ESARWHSSSG…ELLRCPTLRH (68 aa)) the chain is on the cytoplasmic side. The chain crosses the membrane as a helical span at residues 338–358 (LFLCLSMLWFATSFAYYGLVM). Residues 359-368 (DLQGFGVSIY) are Extracellular-facing. A helical transmembrane segment spans residues 369 to 389 (LIQVIFGAVDLPAKLVGFLVI). Over 390-395 (NSLGRR) the chain is Cytoplasmic. A helical membrane pass occupies residues 396–416 (PAQMAALLLAGICILLNGVIP). At 417-420 (QDQS) the chain is on the extracellular side. The helical transmembrane segment at 421–444 (IVRTSLAVPGKGCLAASFNCIFLY) threads the bilayer. The Cytoplasmic segment spans residues 445 to 455 (TGELYPTMIRQ). A helical membrane pass occupies residues 456–475 (TGMGMGSTMARVGSIVSPLV). The Extracellular portion of the chain corresponds to 476–484 (SMTAELYPS). A helical membrane pass occupies residues 485–505 (MPLFIYGAVPVAASAVTVLLP). Topologically, residues 506-550 (ETLGQPLPDTVQDLESRKGKQTRQQQEHQKYMVPLQASAQEKNGL) are cytoplasmic. The segment at 514–550 (DTVQDLESRKGKQTRQQQEHQKYMVPLQASAQEKNGL) is disordered.

This sequence belongs to the major facilitator (TC 2.A.1) superfamily. Organic cation transporter (TC 2.A.1.19) family. Glycosylated. Glycosylation is necessary for proper targeting of the transporter to the plasma membrane.

The protein localises to the cell membrane. It catalyses the reaction prostaglandin F2alpha(out) = prostaglandin F2alpha(in). The catalysed reaction is prostaglandin E2(out) = prostaglandin E2(in). In terms of biological role, involved in the renal elimination of endogenous and exogenous organic anions. Functions as organic anion exchanger when the uptake of one molecule of organic anion is coupled with an efflux of one molecule of endogenous dicarboxylic acid (glutarate, ketoglutarate, etc). Mediates the transport of prostaglandin E2 (PGE2) and prostaglandin F2-alpha (PGF2-alpha) and may be involved in their renal excretion. Also mediates the sodium-independent uptake of p-aminohippurate (PAH), 2,3-dimercapto-1-propanesulfonic acid (DMPS), cidofovir, adefovir, 9-(2-phosphonylmethoxyethyl) guanine (PMEG), 9-(2-phosphonylmethoxyethyl) diaminopurine (PMEDAP), ochratoxin (OTA), acyclovir (ACV), 3'-azido-3-'deoxythymidine (AZT), cimetidine (CMD), 2,4-dichloro-phenoxyacetate (2,4-D), hippurate (HA), indoleacetate (IA), indoxyl sulfate (IS) and 3-carboxy-4-methyl-5-propyl-2-furanpropionate (CMPF) and edaravone sulfate. PAH uptake is inhibited by p-chloromercuribenzenesulphonate (PCMBS), diethyl pyrocarbonate (DEPC), indomethacin, sulindac, diclofenac, carprofen, okadaic acid, benzothiazolylcysteine (BTC), S-chlorotrifluoroethylcysteine (CTFC), cysteine S-conjugates S-dichlorovinylcysteine (DCVC), furosemide, steviol, phorbol 12-myristate 13-acetate (PMA), calcium ionophore A23187, benzylpenicillin, bumetamide, losartan, probenecid, phenol red, urate, glutarate and alpha-ketoglutarate. The polypeptide is Solute carrier family 22 member 6 (SLC22A6) (Pongo abelii (Sumatran orangutan)).